Reading from the N-terminus, the 289-residue chain is Protoheme IX farnesyltransferase 2 (289 aa).

The next 9 membrane-spanning stretches (helical) occupy residues 1 to 21, 28 to 48, 76 to 96, 100 to 120, 125 to 145, 155 to 175, 199 to 219, 221 to 241, and 260 to 280; these read MIKP…FLLA, LTLM…GCGL, YSVL…LAIF, IALL…SLYM, VYGT…GYCA, VILL…IAIF, LHIV…PLAG, TGIA…GMAL, and CSIV…QLVV.

Belongs to the UbiA prenyltransferase family. Protoheme IX farnesyltransferase subfamily.

It is found in the cell inner membrane. It carries out the reaction heme b + (2E,6E)-farnesyl diphosphate + H2O = Fe(II)-heme o + diphosphate. It participates in porphyrin-containing compound metabolism; heme O biosynthesis; heme O from protoheme: step 1/1. Functionally, converts heme B (protoheme IX) to heme O by substitution of the vinyl group on carbon 2 of heme B porphyrin ring with a hydroxyethyl farnesyl side group. The protein is Protoheme IX farnesyltransferase 2 of Shewanella woodyi (strain ATCC 51908 / MS32).